The chain runs to 484 residues: Protein nucleotidyltransferase YdiU (484 aa).

G81, G83, R84, K103, D115, G116, R166, and R173 together coordinate ATP. Catalysis depends on D244, which acts as the Proton acceptor. Positions 245 and 254 each coordinate Mg(2+). D254 contacts ATP.

The protein belongs to the SELO family. The cofactor is Mg(2+). Requires Mn(2+) as cofactor.

It carries out the reaction L-seryl-[protein] + ATP = 3-O-(5'-adenylyl)-L-seryl-[protein] + diphosphate. The catalysed reaction is L-threonyl-[protein] + ATP = 3-O-(5'-adenylyl)-L-threonyl-[protein] + diphosphate. The enzyme catalyses L-tyrosyl-[protein] + ATP = O-(5'-adenylyl)-L-tyrosyl-[protein] + diphosphate. It catalyses the reaction L-histidyl-[protein] + UTP = N(tele)-(5'-uridylyl)-L-histidyl-[protein] + diphosphate. It carries out the reaction L-seryl-[protein] + UTP = O-(5'-uridylyl)-L-seryl-[protein] + diphosphate. The catalysed reaction is L-tyrosyl-[protein] + UTP = O-(5'-uridylyl)-L-tyrosyl-[protein] + diphosphate. Nucleotidyltransferase involved in the post-translational modification of proteins. It can catalyze the addition of adenosine monophosphate (AMP) or uridine monophosphate (UMP) to a protein, resulting in modifications known as AMPylation and UMPylation. The protein is Protein nucleotidyltransferase YdiU of Shewanella sp. (strain MR-7).